Reading from the N-terminus, the 294-residue chain is Porphobilinogen deaminase (294 aa).

The residue at position 232 (Cys-232) is an S-(dipyrrolylmethanemethyl)cysteine.

The protein belongs to the HMBS family. Monomer. Requires dipyrromethane as cofactor.

The catalysed reaction is 4 porphobilinogen + H2O = hydroxymethylbilane + 4 NH4(+). The protein operates within porphyrin-containing compound metabolism; protoporphyrin-IX biosynthesis; coproporphyrinogen-III from 5-aminolevulinate: step 2/4. Tetrapolymerization of the monopyrrole PBG into the hydroxymethylbilane pre-uroporphyrinogen in several discrete steps. The chain is Porphobilinogen deaminase from Corynebacterium diphtheriae (strain ATCC 700971 / NCTC 13129 / Biotype gravis).